The sequence spans 33 residues: Alpha-amanitin proprotein 2 (33 aa).

A propeptide spanning residues 1–10 (MSDINATRLP) is cleaved from the precursor. A (3R,4R)-4,5-dihydroxyisoleucine; in form alpha-amanitin modification is found at isoleucine 11. Isoleucine 11 carries the post-translational modification (3R,4S)-4-hydroxyisoleucine; in form gamma-amanitin. A cross-link (cyclopeptide (Ile-Pro)) is located at residues 11–18 (IWGIGCNP). Positions 12 to 16 (WGIGC) form a cross-link, 2'-cysteinyl-6'-hydroxytryptophan sulfoxide (Trp-Cys). Proline 18 carries the 4-hydroxyproline modification. Residues 19 to 33 (CVGDDVTSVLTRGEA) constitute a propeptide that is removed on maturation.

It belongs to the MSDIN fungal toxin family. In terms of processing, processed by the macrocyclase-peptidase enzyme POPB to yield a toxic cyclic octapeptide. POPB first removes 10 residues from the N-terminus. Conformational trapping of the remaining peptide forces the enzyme to release this intermediate rather than proceed to macrocyclization. The enzyme rebinds the remaining peptide in a different conformation and catalyzes macrocyclization of the N-terminal 8 residues. Expressed in basidiocarps.

Its function is as follows. Major toxin belonging to the bicyclic octapeptides amatoxins that acts by binding non-competitively to RNA polymerase II and greatly slowing the elongation of transcripts from target promoters. In Amanita exitialis (Guangzhou destroying angel), this protein is Alpha-amanitin proprotein 2.